Reading from the N-terminus, the 393-residue chain is Flavohemoprotein (393 aa).

Positions 1-139 (MLSNAQRALI…LADLLIEAEE (139 aa)) constitute a Globin domain. Heme b is bound at residue His-85. Catalysis depends on charge relay system residues Tyr-95 and Glu-138. Positions 150–393 (GGWRGVRRFR…FFGPAAALDA (244 aa)) are reductase. The 104-residue stretch at 153–256 (RGVRRFRVAR…FPPAGDFVLR (104 aa)) folds into the FAD-binding FR-type domain. FAD is bound by residues Tyr-191 and 205 to 208 (RNYS). NADP(+) is bound at residue 268–273 (GVGITP). FAD is bound at residue 384–387 (FFGP).

This sequence belongs to the globin family. Two-domain flavohemoproteins subfamily. The protein in the C-terminal section; belongs to the flavoprotein pyridine nucleotide cytochrome reductase family. Heme b is required as a cofactor. The cofactor is FAD.

The catalysed reaction is 2 nitric oxide + NADPH + 2 O2 = 2 nitrate + NADP(+) + H(+). It catalyses the reaction 2 nitric oxide + NADH + 2 O2 = 2 nitrate + NAD(+) + H(+). Its function is as follows. Is involved in NO detoxification in an aerobic process, termed nitric oxide dioxygenase (NOD) reaction that utilizes O(2) and NAD(P)H to convert NO to nitrate, which protects the bacterium from various noxious nitrogen compounds. Therefore, plays a central role in the inducible response to nitrosative stress. This is Flavohemoprotein from Pseudomonas aeruginosa (strain ATCC 15692 / DSM 22644 / CIP 104116 / JCM 14847 / LMG 12228 / 1C / PRS 101 / PAO1).